Reading from the N-terminus, the 390-residue chain is Multidrug export protein EmrA (390 aa).

Over 1-24 (MSANAETQTPQQPVKKSGKRKRLL) the chain is Cytoplasmic. Residues 25–45 (LLLTLLFIIIAVAIGIYWFLV) traverse the membrane as a helical segment. Topologically, residues 46–390 (LRHFEETDDA…IDDIVKANAG (345 aa)) are periplasmic. Positions 120-180 (INSKQLQANI…QAQLDVAIQQ (61 aa)) form a coiled coil.

This sequence belongs to the membrane fusion protein (MFP) (TC 8.A.1) family. In terms of assembly, homodimer and homotrimer. Part of the tripartite efflux system EmrAB-TolC, which is composed of an inner membrane transporter, EmrB, a periplasmic membrane fusion protein, EmrA, and an outer membrane component, TolC. The complex forms a large protein conduit and can translocate molecules across both the inner and outer membranes. Interacts with EmrB. EmrAB complex forms a dimer in vitro.

Its subcellular location is the cell inner membrane. Its function is as follows. Part of the tripartite efflux system EmrAB-TolC, which confers resistance to antibiotics such as CCCP, FCCP, 2,4-dinitrophenol and nalidixic acid. EmrA is a drug-binding protein that provides a physical link between EmrB and TolC. This is Multidrug export protein EmrA (emrA) from Escherichia coli (strain K12).